The following is a 769-amino-acid chain: Cullin-3 (769 aa).

The tract at residues 614-655 (DRELPSTTSSTTTTTTTATSSSTSTSPSSSSSSISTPTPSKS) is disordered. Over residues 618-653 (PSTTSSTTTTTTTATSSSTSTSPSSSSSSISTPTPS) the composition is skewed to low complexity. A Cullin neddylation domain is found at 699–761 (DRKHQIEASI…REYLERSKQD (63 aa)). Residue Lys713 forms a Glycyl lysine isopeptide (Lys-Gly) (interchain with G-Cter in NEDD8) linkage.

This sequence belongs to the cullin family. In terms of processing, neddylated. Deneddylated via its interaction with the COP9 signalosome (CSN) complex.

It localises to the nucleus. It functions in the pathway protein modification; protein ubiquitination. Probable core component of cullin-based SCF-like E3 ubiquitin-protein ligase complexes which mediate the ubiquitination and subsequent proteasomal degradation of target proteins. The E3 ubiquitin-protein ligase activity of the complex is dependent on the neddylation of the cullin subunit. This chain is Cullin-3 (culC), found in Dictyostelium discoideum (Social amoeba).